A 110-amino-acid polypeptide reads, in one-letter code: Transcription factor S (110 aa).

Residues C4, C7, C22, C25, C71, C74, C99, and C102 each coordinate Zn(2+). The C4-type zinc finger occupies 4–25 (CPKCGNLMLPDRKRKVWVCRSC). The TFIIS-type zinc-finger motif lies at 67-107 (TKITCPKCGNDTAYWWEMQTRAGDEPSTIFYKCTKCGHTWR).

Belongs to the archaeal RpoM/eukaryotic RPA12/RPB9/RPC11 RNA polymerase family.

Functionally, induces RNA cleavage activity in the RNA polymerase. In its presence, the cleavage activity of the RNA polymerase truncates the RNA back to position +15 in a stepwise manner by releasing mainly dinucleotides from the 3'-end of the nascent RNA. The truncated RNAs are able to continue elongation. Involved in transcriptional proofreading and fidelity. Misincorporation of nucleotides during elongation of transcription leads to arrested elongation complexes which are rescued by TFS-promoted removal of a dinucleotide from the 3'-end. TFS is able to induce a cleavage resynthesis cycle in stalled elongation complexes (resulting from the next missing nucleotide or a reduced incorporation rate of a wrong nucleotide) preventing misincorporation and enabling proofreading in a post-incorporation manner. Pausing of elongation complexes is the main determinant of TFS-induced RNA cleavage. The protein is Transcription factor S of Thermococcus celer.